A 164-amino-acid polypeptide reads, in one-letter code: MEMTSTQRLILANQYKLMGLLDPANAQKYARLETIVKGGFSLELKELDNEFLAISEAECQTVLETLEMYHALQVSYENLADKSDLTAHRLQFIGYDAIRERKYLNYLRFITGIEGKYQEFMRCAPGCDSQTPMWDKYNKMLDMWKACPHQYHLSLVEIQNILNA.

This sequence belongs to the UPF0304 family.

The polypeptide is UPF0304 protein MS2240 (Mannheimia succiniciproducens (strain KCTC 0769BP / MBEL55E)).